Consider the following 153-residue polypeptide: Ribosome maturation factor RimP (153 aa).

It belongs to the RimP family.

It localises to the cytoplasm. Functionally, required for maturation of 30S ribosomal subunits. The polypeptide is Ribosome maturation factor RimP (Glaesserella parasuis serovar 5 (strain SH0165) (Haemophilus parasuis)).